The following is a 140-amino-acid chain: ATP synthase epsilon chain (140 aa).

It belongs to the ATPase epsilon chain family. F-type ATPases have 2 components, CF(1) - the catalytic core - and CF(0) - the membrane proton channel. CF(1) has five subunits: alpha(3), beta(3), gamma(1), delta(1), epsilon(1). CF(0) has three main subunits: a, b and c.

It is found in the cell inner membrane. Produces ATP from ADP in the presence of a proton gradient across the membrane. The chain is ATP synthase epsilon chain from Xanthomonas axonopodis pv. citri (strain 306).